Reading from the N-terminus, the 652-residue chain is NADH-ubiquinone oxidoreductase chain 5 (652 aa).

A run of 16 helical transmembrane segments spans residues 1–21 (MYLS…FLGR), 30–50 (LITC…FIEV), 72–92 (IIWG…VLII), 119–139 (LFTF…MFVG), 140–160 (WEGV…RIAA), 177–197 (FLTI…YSTV), 200–220 (LAPY…LIGA), 241–261 (TPVS…YLLM), 274–294 (LLLC…IGLF), 301–319 (VIAY…AIGL), 331–351 (NHAF…HAVA), 365–385 (FLPL…AFPF), 403–423 (FSFS…FTTL), 454–474 (LFLT…GFIT), 505–525 (FAVP…FSII), and 619–639 (LYIL…FNFL).

It belongs to the complex I subunit 5 family.

Its subcellular location is the mitochondrion inner membrane. The enzyme catalyses a ubiquinone + NADH + 5 H(+)(in) = a ubiquinol + NAD(+) + 4 H(+)(out). Functionally, core subunit of the mitochondrial membrane respiratory chain NADH dehydrogenase (Complex I) that is believed to belong to the minimal assembly required for catalysis. Complex I functions in the transfer of electrons from NADH to the respiratory chain. The immediate electron acceptor for the enzyme is believed to be ubiquinone. This Podospora anserina (strain S / ATCC MYA-4624 / DSM 980 / FGSC 10383) (Pleurage anserina) protein is NADH-ubiquinone oxidoreductase chain 5 (ND5).